The sequence spans 197 residues: Protein RmlC homolog (197 aa).

His76 serves as the catalytic Proton acceptor. Tyr140 acts as the Proton donor in catalysis.

Could catalyze a 3,5-epimerization. The protein is Protein RmlC homolog (rfbC) of Streptococcus pyogenes serotype M6 (strain ATCC BAA-946 / MGAS10394).